Reading from the N-terminus, the 270-residue chain is 2-aminoethanethiol dioxygenase (270 aa).

Positions 21–48 (FRGSGGGRGASDRDAASGPEAPMQPGFP) are disordered. Residues His-112 and His-114 each contribute to the Fe cation site. The segment at 140-164 (GGQRPRALPPEQQFEPPLQPREREA) is disordered. His-193 lines the Fe cation pocket. Positions 220 to 223 (CHYY) form a cross-link, 3'-(S-cysteinyl)-tyrosine (Cys-Tyr).

As to quaternary structure, monomer. It depends on Fe cation as a cofactor.

The enzyme catalyses cysteamine + O2 = hypotaurine + H(+). It catalyses the reaction N-terminal L-cysteinyl-[protein] + O2 = N-terminal S-hydroxy-S-oxy-L-cysteinyl-[protein] + H(+). Its function is as follows. Plays a vital role in regulating thiol metabolism and preserving oxygen homeostasis by oxidizing the sulfur of cysteamine and N-terminal cysteine-containing proteins to their corresponding sulfinic acids using O2 as a cosubstrate. Catalyzes the oxidation of cysteamine (2-aminoethanethiol) to hypotaurine. Catalyzes the oxidation of regulators of G-protein signaling 4 (RGS4) and 5 (RGS5) and interleukin-32 (IL32). The protein is 2-aminoethanethiol dioxygenase (ADO) of Homo sapiens (Human).